Reading from the N-terminus, the 72-residue chain is MVVRAPKKKVCMYCEQKREPDYKNYEELRNFLTERGRIKDRKQTGLCAKHQRRLAVQIKRARQLGLLPYVVY.

It belongs to the bacterial ribosomal protein bS18 family. Part of the 30S ribosomal subunit. Forms a tight heterodimer with protein bS6.

Its function is as follows. Binds as a heterodimer with protein bS6 to the central domain of the 16S rRNA, where it helps stabilize the platform of the 30S subunit. This Aquifex aeolicus (strain VF5) protein is Small ribosomal subunit protein bS18.